The primary structure comprises 347 residues: MEGIFAAYVLPALIIALKSVVLLVVLLIVVAYLLYADRKIWAAVQLRRGPNVVGPWGLFQAFADLLKFVFKEPIIPSGANKGVFLLAPFISAVLAMATWAVIPVNESWAVANINVGILYIFAISSLEVYGVIMGGWASNSKYPFLGALRSAAQMVSYEVSIGFVIVTVLLTVGSLNLTDIVLSQNTGLGTMLGLPASFLDWNWLCLFPMFVVFFISALAETNRPPFDLVEAESELVAGHMIEYSSTPFLLFFLGEYVAITLMCALMTVLFLGGWLPPVDVWFLSWVPGIIWFMLKLCFCFFLFAMVKAFVPRYRYDQLMRLGWKVFLPISLFMVVATATFLKVFGLA.

The next 9 membrane-spanning stretches (helical) occupy residues 13-33, 50-70, 82-102, 115-135, 161-181, 198-218, 248-268, 286-306, and 325-345; these read LIIALKSVVLLVVLLIVVAYL, PNVVGPWGLFQAFADLLKFVF, GVFLLAPFISAVLAMATWAVI, VGILYIFAISSLEVYGVIMGG, IGFVIVTVLLTVGSLNLTDIV, FLDWNWLCLFPMFVVFFISAL, FLLFFLGEYVAITLMCALMTV, VPGIIWFMLKLCFCFFLFAMV, and VFLPISLFMVVATATFLKVFG.

Belongs to the complex I subunit 1 family. NDH-1 is composed of 14 different subunits. Subunits NuoA, H, J, K, L, M, N constitute the membrane sector of the complex.

It localises to the cell inner membrane. It carries out the reaction a quinone + NADH + 5 H(+)(in) = a quinol + NAD(+) + 4 H(+)(out). NDH-1 shuttles electrons from NADH, via FMN and iron-sulfur (Fe-S) centers, to quinones in the respiratory chain. The immediate electron acceptor for the enzyme in this species is believed to be ubiquinone. Couples the redox reaction to proton translocation (for every two electrons transferred, four hydrogen ions are translocated across the cytoplasmic membrane), and thus conserves the redox energy in a proton gradient. This subunit may bind ubiquinone. In Brucella ovis (strain ATCC 25840 / 63/290 / NCTC 10512), this protein is NADH-quinone oxidoreductase subunit H.